The following is a 199-amino-acid chain: Chaperone protein TorD (199 aa).

It belongs to the TorD/DmsD family. TorD subfamily.

The protein resides in the cytoplasm. Its function is as follows. Involved in the biogenesis of TorA. Acts on TorA before the insertion of the molybdenum cofactor and, as a result, probably favors a conformation of the apoenzyme that is competent for acquiring the cofactor. This is Chaperone protein TorD from Escherichia coli O45:K1 (strain S88 / ExPEC).